A 213-amino-acid polypeptide reads, in one-letter code: Large ribosomal subunit protein mL67 (213 aa).

The protein belongs to the mitochondrion-specific ribosomal protein mL67 family.

It is found in the nucleus. The protein resides in the mitochondrion. In terms of biological role, transcription factor involved in regulation of RNA polymerase II-dependent transcription. Also involved in regulation of mitochondrial DNA recombination, maintenance and repair, and generation of homoplasmic cells. The chain is Large ribosomal subunit protein mL67 (MHR1) from Eremothecium gossypii (strain ATCC 10895 / CBS 109.51 / FGSC 9923 / NRRL Y-1056) (Yeast).